Reading from the N-terminus, the 403-residue chain is Large ribosomal subunit protein uL3 (403 aa).

A disordered region spans residues 1-37; that stretch reads MSHRKFSAPRHGSLGFLPRKRSSRHRGKVKSFPKDDP. The residue at position 13 (Ser13) is a Phosphoserine. Residues 18–31 are compositionally biased toward basic residues; that stretch reads PRKRSSRHRGKVKS. Lys39 participates in a covalent cross-link: Glycyl lysine isopeptide (Lys-Gly) (interchain with G-Cter in SUMO2). Position 136 is an N6-acetyllysine (Lys136). Glycyl lysine isopeptide (Lys-Gly) (interchain with G-Cter in SUMO2) cross-links involve residues Lys224 and Lys226. His245 carries the post-translational modification Tele-methylhistidine. Residues Lys286 and Lys294 each carry the N6-acetyllysine; alternate modification. Lys286 participates in a covalent cross-link: Glycyl lysine isopeptide (Lys-Gly) (interchain with G-Cter in SUMO2); alternate. Lys294 is covalently cross-linked (Glycyl lysine isopeptide (Lys-Gly) (interchain with G-Cter in SUMO1); alternate). Ser304 bears the Phosphoserine mark. At Lys366 the chain carries N6-acetyllysine; alternate. Lys366 is covalently cross-linked (Glycyl lysine isopeptide (Lys-Gly) (interchain with G-Cter in SUMO2); alternate). Lys373 carries the post-translational modification N6-acetyllysine. Residues Lys386, Lys393, and Lys399 each participate in a glycyl lysine isopeptide (Lys-Gly) (interchain with G-Cter in SUMO2) cross-link.

Belongs to the universal ribosomal protein uL3 family. Component of the large ribosomal subunit. Interacts with DHX33. Constitutively monomethylated at His-245 by METTL18. Methylation at His-245 regulates translation elongation by slowing ribosome traversal on tyrosine codons: slower elongation provides enough time for proper folding of synthesized proteins and prevents cellular aggregation of tyrosine-rich proteins. It is not required for incorporation of RPL3 into ribosomes.

Its subcellular location is the nucleus. It localises to the nucleolus. It is found in the cytoplasm. Its function is as follows. Component of the large ribosomal subunit. The ribosome is a large ribonucleoprotein complex responsible for the synthesis of proteins in the cell. In Homo sapiens (Human), this protein is Large ribosomal subunit protein uL3 (RPL3).